We begin with the raw amino-acid sequence, 86 residues long: UPF0297 protein SERP1181 (86 aa).

Belongs to the UPF0297 family.

The sequence is that of UPF0297 protein SERP1181 from Staphylococcus epidermidis (strain ATCC 35984 / DSM 28319 / BCRC 17069 / CCUG 31568 / BM 3577 / RP62A).